Here is a 419-residue protein sequence, read N- to C-terminus: Phosphatidylcholine:ceramide cholinephosphotransferase 1 (419 aa).

In terms of domain architecture, SAM spans 13–76 (WSPKKVADWL…LDMIETLKME (64 aa)). At serine 14 the chain carries Phosphoserine. Transmembrane regions (helical) follow at residues 142–162 (LLAF…ISVV), 190–210 (FSIC…QWLL), 221–241 (FFCI…VTTL), 282–302 (MCGD…YLFI), and 310–330 (LWWY…CILL). Histidine 291 is a catalytic residue. The Cytoplasmic portion of the chain corresponds to 331–419 (AHDHYTVDVV…VKYSRLVNDT (89 aa)). Residues histidine 334 and aspartate 338 contribute to the active site.

It belongs to the sphingomyelin synthase family.

It is found in the golgi apparatus membrane. The enzyme catalyses an N-acylsphing-4-enine + a 1,2-diacyl-sn-glycero-3-phosphocholine = a sphingomyelin + a 1,2-diacyl-sn-glycerol. It carries out the reaction 1-(9Z-octadecenoyl)-2-acyl-sn-3-glycerol + a sphingomyelin = a 1-(9Z-octadecenoyl)-2-acyl-sn-glycero-3-phosphocholine + an N-acylsphing-4-enine. It catalyses the reaction N-hexadecanoylsphinganine + a 1,2-diacyl-sn-glycero-3-phosphocholine = N-hexadecanoyl-sphinganine-1-phosphocholine + a 1,2-diacyl-sn-glycerol. The catalysed reaction is N-hexadecanoyl-(4R)-hydroxysphinganine + a 1,2-diacyl-sn-glycero-3-phosphocholine = N-hexadecanoyl-(4R)-hydroxysphinganine-phosphocholine + a 1,2-diacyl-sn-glycerol. The enzyme catalyses an N-acylsphing-4-enine + a 1,2-diacyl-sn-glycero-3-phosphoethanolamine = an N-acylsphing-4-enine 1-phosphoethanolamine + a 1,2-diacyl-sn-glycerol. It functions in the pathway sphingolipid metabolism. Major sphingomyelin synthase at the Golgi apparatus. Catalyzes the reversible transfer of phosphocholine moiety in sphingomyelin biosynthesis: in the forward reaction transfers phosphocholine head group of phosphatidylcholine (PC) on to ceramide (CER) to form ceramide phosphocholine (sphingomyelin, SM) and diacylglycerol (DAG) as by-product, and in the reverse reaction transfers phosphocholine from SM to DAG to form PC and CER. The direction of the reaction depends on the levels of CER and DAG in Golgi membranes. Converts the newly synthesized CER, that is transported from the endoplasmic reticulum to the trans-Golgi by the Cer transport protein (CERT), to SM. Can form a heteromeric complex with glucosylceramide synthase (GCS) increasing SMS activity and reducing glucosylceramide synthesis, a critical mechanism that controls the metabolic fate of CER in the Golgi. Does not use free phosphorylcholine or CDP-choline as donor. Can also transfer phosphoethanolamine head group of phosphatidylethanolamine (PE) on to CER to form ceramide phosphoethanolamine (CPE). Regulates receptor-mediated signal transduction via mitogenic DAG and proapoptotic CER, as well as via SM, a structural component of membrane rafts that serve as platforms for signal transduction and protein sorting. Plays a role in secretory transport via regulation of DAG pool at the Golgi apparatus and its downstream effects on PRKD1. The sequence is that of Phosphatidylcholine:ceramide cholinephosphotransferase 1 (Sgms1) from Rattus norvegicus (Rat).